Reading from the N-terminus, the 214-residue chain is Cysteine-rich venom protein LEI1 (214 aa).

Positions 1 to 18 (MIAFILLSLAAVLQQSFG) are cleaved as a signal peptide. The SCP domain maps to 37–165 (VNMHNSLRRS…YYSYFYVCQY (129 aa)). 5 disulfides stabilise this stretch: C74-C152, C91-C166, C147-C163, C185-C192, and C188-C197. One can recognise a ShKT domain in the interval 201–214 (CTVENKFTNCNTLV).

This sequence belongs to the CRISP family. Expressed by the venom gland.

Its subcellular location is the secreted. Functionally, blocks contraction of smooth muscle elicited by high potassium-induced depolarization, but does not block caffeine-stimulated contraction. May target voltage-gated calcium channels on smooth muscle. In Leioheterodon madagascariensis (Malagasy giant hognose snake), this protein is Cysteine-rich venom protein LEI1.